Reading from the N-terminus, the 196-residue chain is Rho-related protein racA (196 aa).

Positions 13, 15, 16, 17, 18, 32, 35, 60, 116, 118, and 159 each coordinate GTP. Threonine 17 contributes to the Mg(2+) binding site. Short sequence motifs (switch) lie at residues 26–37 (NAFPNEYIPTVF) and 57–75 (DTAGQEDYDRLRPLSYPQT). Threonine 35 contacts Mg(2+). Cysteine 193 bears the Cysteine methyl ester mark. Cysteine 193 is lipidated: S-geranylgeranyl cysteine. A propeptide spans 194-196 (LLF) (removed in mature form).

The protein belongs to the small GTPase superfamily. Rho family. Interacts (GTP-bound form) with PAK2 (via CRIB domain). Requires Mg(2+) as cofactor.

It localises to the cell membrane. The protein resides in the cytoplasm. Its subcellular location is the cytoskeleton. It carries out the reaction GTP + H2O = GDP + phosphate + H(+). Regulated by guanine nucleotide exchange factors (GEFs) which promote the exchange of bound GDP for free GTP, GTPase activating proteins (GAPs) which increase the GTP hydrolysis activity, and GDP dissociation inhibitors which inhibit the dissociation of the nucleotide from the GTPase. Small GTPase which cycles between active GTP-bound and inactive GDP-bound states. Involved in cytoskeleton remodeling. Plays a role in phagocytosis of bacteria and host erythrocytes. Involved in capping of surface receptors. May be involved in cytokinesis. The polypeptide is Rho-related protein racA (Entamoeba histolytica (strain ATCC 30459 / HM-1:IMSS / ABRM)).